An 818-amino-acid chain; its full sequence is Myosin-A (818 aa).

Phosphoserine; by PKG is present on Ser-19. A Myosin motor domain is found at 97 to 771 (MSFGDIGLLN…GAKILTKIQR (675 aa)). Position 191 to 198 (191 to 198 (GESGAGKT)) interacts with ATP. Residues 661 to 671 (PHFIRCIKPNE) form an actin-binding region. Positions 773–818 (KLVEWENCVSVIEAAILKHKYKQKVNKNIPSLLRVQAHIRKKMVAQ) are tail.

It belongs to the TRAFAC class myosin-kinesin ATPase superfamily. Myosin family. Component of the glideosome complex composed of GAP50, GAP45, MTIP and MyoA; the complex is formed during the late schizont stage and in merozoites. MyoA, MTIP and GAP45 probably form an initial complex in the cytoplasm which is then recruited to the outer face of the inner membrane complex via the interaction with GAP50. Interacts with ACT1.

The protein localises to the cell membrane. Its function is as follows. Myosins are actin-based motor molecules with ATPase activity. Unconventional myosins serve in intracellular movements. Their highly divergent tails are presumed to bind to membranous compartments, which would be moved relative to actin filaments. The chain is Myosin-A from Plasmodium falciparum (isolate 3D7).